The chain runs to 502 residues: Thermosome subunit beta (502 aa).

This sequence belongs to the TCP-1 chaperonin family. As to quaternary structure, forms a Heterooligomeric complex of two stacked eight-membered rings.

Its function is as follows. Molecular chaperone; binds unfolded polypeptides in vitro, and has a weak ATPase activity. The sequence is that of Thermosome subunit beta (thsB) from Desulfurococcus mucosus (Desulfurococcus mobilis).